Here is a 220-residue protein sequence, read N- to C-terminus: Peptide methionine sulfoxide reductase MsrA (220 aa).

The active site involves cysteine 54.

Belongs to the MsrA Met sulfoxide reductase family.

The catalysed reaction is L-methionyl-[protein] + [thioredoxin]-disulfide + H2O = L-methionyl-(S)-S-oxide-[protein] + [thioredoxin]-dithiol. The enzyme catalyses [thioredoxin]-disulfide + L-methionine + H2O = L-methionine (S)-S-oxide + [thioredoxin]-dithiol. In terms of biological role, has an important function as a repair enzyme for proteins that have been inactivated by oxidation. Catalyzes the reversible oxidation-reduction of methionine sulfoxide in proteins to methionine. In Salinispora tropica (strain ATCC BAA-916 / DSM 44818 / JCM 13857 / NBRC 105044 / CNB-440), this protein is Peptide methionine sulfoxide reductase MsrA.